A 138-amino-acid polypeptide reads, in one-letter code: Acidic phospholipase A2 pgPLA 1b/pgPLA 2b (138 aa).

Residues 1–16 (MRTLWIMAVLLVGVKG) form the signal peptide. 7 cysteine pairs are disulfide-bonded: cysteine 42–cysteine 131, cysteine 44–cysteine 60, cysteine 59–cysteine 111, cysteine 65–cysteine 138, cysteine 66–cysteine 104, cysteine 73–cysteine 97, and cysteine 91–cysteine 102. Ca(2+) contacts are provided by tyrosine 43, glycine 45, and glycine 47. Residue histidine 63 is part of the active site. Aspartate 64 is a Ca(2+) binding site. The active site involves aspartate 105.

This sequence belongs to the phospholipase A2 family. Group II subfamily. D49 sub-subfamily. Ca(2+) serves as cofactor. In terms of tissue distribution, expressed by the venom gland.

It localises to the secreted. It carries out the reaction a 1,2-diacyl-sn-glycero-3-phosphocholine + H2O = a 1-acyl-sn-glycero-3-phosphocholine + a fatty acid + H(+). PLA2 catalyzes the calcium-dependent hydrolysis of the 2-acyl groups in 3-sn-phosphoglycerides. The protein is Acidic phospholipase A2 pgPLA 1b/pgPLA 2b of Protobothrops flavoviridis (Habu).